An 89-amino-acid polypeptide reads, in one-letter code: LYR motif-containing protein 4 (89 aa).

Belongs to the complex I LYR family.

Its subcellular location is the mitochondrion. The protein resides in the nucleus. Its pathway is cofactor biosynthesis; iron-sulfur cluster biosynthesis. In terms of biological role, required for nuclear and mitochondrial iron-sulfur protein biosynthesis. The protein is LYR motif-containing protein 4 (lyrm4) of Xenopus laevis (African clawed frog).